The primary structure comprises 291 residues: ATP synthase gamma chain (291 aa).

This sequence belongs to the ATPase gamma chain family. As to quaternary structure, F-type ATPases have 2 components, CF(1) - the catalytic core - and CF(0) - the membrane proton channel. CF(1) has five subunits: alpha(3), beta(3), gamma(1), delta(1), epsilon(1). CF(0) has three main subunits: a, b and c.

The protein resides in the cell inner membrane. Its function is as follows. Produces ATP from ADP in the presence of a proton gradient across the membrane. The gamma chain is believed to be important in regulating ATPase activity and the flow of protons through the CF(0) complex. The chain is ATP synthase gamma chain from Pelodictyon phaeoclathratiforme (strain DSM 5477 / BU-1).